The sequence spans 267 residues: Low affinity immunoglobulin gamma Fc region receptor III (267 aa).

Residues 1-36 (MTLETQMFQNAHSGSQWLLPPLTMLLLFAFADRQTA) form the signal peptide. At 37-221 (NLPKAVVKRD…STSSLVWFHA (185 aa)) the chain is on the extracellular side. 2 Ig-like C2-type domains span residues 39-121 (PKAV…EVIS) and 122-204 (DWLL…VTIT). 2 disulfides stabilise this stretch: C62–C104 and C143–C187. N70, N78, N97, N171, and N178 each carry an N-linked (GlcNAc...) asparagine glycan. Residues 222 to 241 (AFCLVMCLLFAVDTGLYFCV) form a helical membrane-spanning segment. The Cytoplasmic segment spans residues 242 to 267 (RRNLQTSGEDWRKSLSVGKYKAPQDK).

In terms of assembly, may form multisubunit complex with other heteroproteins. This association is required for efficient cell-surface expression. Does not associate with CD3 zeta. As to expression, expressed on natural killer cells and macrophages.

It is found in the cell membrane. In terms of biological role, receptor for the Fc region of complexed immunoglobulins gamma. Low affinity receptor which binds to IgG1, IgG2a and IgG2b. Mediates neutrophil activation by IgG complexes redundantly with Fcgr4. The protein is Low affinity immunoglobulin gamma Fc region receptor III (Fcgr3) of Rattus norvegicus (Rat).